A 445-amino-acid polypeptide reads, in one-letter code: Nuclear hormone receptor family member nhr-1 (445 aa).

Residues 19–55 form a disordered region; that stretch reads PMVNSQRNEDPSMYMNGSAASVSHTNGSSSMGNDQKF. The span at 36–51 shows a compositional bias: polar residues; the sequence is SAASVSHTNGSSSMGN. The nuclear receptor DNA-binding region spans 70 to 145; it reads GELCAVCSDL…VGMDAKALQI (76 aa). 2 NR C4-type zinc fingers span residues 73–93 and 109–133; these read CAVC…CNGC and CQYN…FNKC. The region spanning 179–444 is the NR LBD domain; the sequence is QDQEIIDQLT…PFVKELCMKR (266 aa).

This sequence belongs to the nuclear hormone receptor family.

Its subcellular location is the nucleus. Functionally, orphan nuclear receptor which acts in concert with the insulin/IGF-1-like signaling (IIS) pathway during osmotic stress, perhaps in response to a ligand modified by the sulfotransferase ssu-1. The chain is Nuclear hormone receptor family member nhr-1 (nhr-1) from Caenorhabditis elegans.